Reading from the N-terminus, the 251-residue chain is Cytochrome c oxidase subunit 2 (251 aa).

A signal peptide spans 1–15 (MLNLLYNQIFNVILN). At 16 to 41 (DVPTPYNTYFQDSATPNQEGILELHD) the chain is on the mitochondrial intermembrane side. Residues 42 to 62 (NIMFYLLVILGLVSWLLFTIT) form a helical membrane-spanning segment. The Mitochondrial matrix segment spans residues 63–82 (RTYSKNPIAYKYIKHGQTIE). A helical transmembrane segment spans residues 83-103 (IIWTIFPAVILLIIAFPSFIL). The Mitochondrial intermembrane portion of the chain corresponds to 104-251 (LYLCDEVISP…PAFLEWLNEQ (148 aa)). The Cu cation site is built by histidine 186, cysteine 221, glutamate 223, cysteine 225, histidine 229, and methionine 232. Glutamate 223 is a Mg(2+) binding site.

The protein belongs to the cytochrome c oxidase subunit 2 family. In terms of assembly, component of the cytochrome c oxidase (complex IV, CIV), a multisubunit enzyme composed of a catalytic core of 3 subunits and several supernumerary subunits. The complex exists as a monomer or a dimer and forms supercomplexes (SCs) in the inner mitochondrial membrane with ubiquinol-cytochrome c oxidoreductase (cytochrome b-c1 complex, complex III, CIII). The cofactor is Cu cation. Post-translationally, the signal sequence of COX2 is processed by IMP1.

The protein resides in the mitochondrion inner membrane. The catalysed reaction is 4 Fe(II)-[cytochrome c] + O2 + 8 H(+)(in) = 4 Fe(III)-[cytochrome c] + 2 H2O + 4 H(+)(out). Component of the cytochrome c oxidase, the last enzyme in the mitochondrial electron transport chain which drives oxidative phosphorylation. The respiratory chain contains 3 multisubunit complexes succinate dehydrogenase (complex II, CII), ubiquinol-cytochrome c oxidoreductase (cytochrome b-c1 complex, complex III, CIII) and cytochrome c oxidase (complex IV, CIV), that cooperate to transfer electrons derived from NADH and succinate to molecular oxygen, creating an electrochemical gradient over the inner membrane that drives transmembrane transport and the ATP synthase. Cytochrome c oxidase is the component of the respiratory chain that catalyzes the reduction of oxygen to water. Electrons originating from reduced cytochrome c in the intermembrane space (IMS) are transferred via the dinuclear copper A center (CU(A)) of subunit 2 and heme A of subunit 1 to the active site in subunit 1, a binuclear center (BNC) formed by heme A3 and copper B (CU(B)). The BNC reduces molecular oxygen to 2 water molecules using 4 electrons from cytochrome c in the IMS and 4 protons from the mitochondrial matrix. The protein is Cytochrome c oxidase subunit 2 (COX2) of Lachancea thermotolerans (strain ATCC 56472 / CBS 6340 / NRRL Y-8284) (Yeast).